The sequence spans 170 residues: Photosystem I assembly protein Ycf3 (170 aa).

3 TPR repeats span residues 35 to 68 (AFTY…EIDP), 72 to 105 (SYIL…NPFL), and 120 to 153 (GEQA…TPGN).

This sequence belongs to the Ycf3 family.

It localises to the plastid. The protein localises to the chloroplast thylakoid membrane. Its function is as follows. Essential for the assembly of the photosystem I (PSI) complex. May act as a chaperone-like factor to guide the assembly of the PSI subunits. This Zea mays (Maize) protein is Photosystem I assembly protein Ycf3.